A 258-amino-acid polypeptide reads, in one-letter code: Agamous-like MADS-box protein AGL3 (258 aa).

Positions 3–57 constitute an MADS-box domain; sequence RGKVELKRIENKINRQVTFAKRRNGLLKKAYELSVLCDAEIALLIFSNRGKLYEF. One can recognise a K-box domain in the interval 88-178; the sequence is LQDKYQDYLK…RRKLEDSDAA (91 aa). The tract at residues 186 to 214 is disordered; that stretch reads SSAAEQQQQHQQQQQGMSSYQSNPPIQEA. The span at 191–200 shows a compositional bias: low complexity; it reads QQQQHQQQQQ. The span at 201–210 shows a compositional bias: polar residues; that stretch reads GMSSYQSNPP.

As to quaternary structure, forms homodimers. Interacts with TT16/AGL32. Expressed in aerial vegetative organs and flowers, but not in roots. Expressed in flower primordia.

The protein resides in the nucleus. Probable transcription factor that binds specifically to the CArG box DNA sequence 5'-CC (A/T)6 GG-3'. Plays an important role in the determination of flower meristem identity. Involved in the specification of sepal identity. Contributes to the development of petals, stamens and carpels. The polypeptide is Agamous-like MADS-box protein AGL3 (AGL3) (Arabidopsis thaliana (Mouse-ear cress)).